The following is a 427-amino-acid chain: Serine--tRNA ligase (427 aa).

233–235 (TGE) is an L-serine binding site. 264-266 (RSE) is an ATP binding site. Residue E287 coordinates L-serine. 351–354 (EVSS) is an ATP binding site. L-serine is bound at residue S387.

Belongs to the class-II aminoacyl-tRNA synthetase family. Type-1 seryl-tRNA synthetase subfamily. In terms of assembly, homodimer. The tRNA molecule binds across the dimer.

The protein resides in the cytoplasm. It carries out the reaction tRNA(Ser) + L-serine + ATP = L-seryl-tRNA(Ser) + AMP + diphosphate + H(+). The catalysed reaction is tRNA(Sec) + L-serine + ATP = L-seryl-tRNA(Sec) + AMP + diphosphate + H(+). It participates in aminoacyl-tRNA biosynthesis; selenocysteinyl-tRNA(Sec) biosynthesis; L-seryl-tRNA(Sec) from L-serine and tRNA(Sec): step 1/1. Catalyzes the attachment of serine to tRNA(Ser). Is also able to aminoacylate tRNA(Sec) with serine, to form the misacylated tRNA L-seryl-tRNA(Sec), which will be further converted into selenocysteinyl-tRNA(Sec). The sequence is that of Serine--tRNA ligase from Buchnera aphidicola subsp. Acyrthosiphon pisum (strain 5A).